The sequence spans 214 residues: uncharacterized protein (214 aa).

The N-terminal stretch at 1-17 (MLKKIIILFLGVFVLSG) is a signal peptide. A lipid anchor (N-palmitoyl cysteine) is attached at Cys18. Residue Cys18 is the site of S-diacylglycerol cysteine attachment. Acidic residues predominate over residues 64-77 (DNLDDPEDDDDDYD). Disordered regions lie at residues 64–83 (DNLD…LRGE), 106–138 (YKAE…KERK), and 166–197 (TANQ…SKVK). A coiled-coil region spans residues 120–162 (TLSKANKKVRKDNTDKERKMQEELDQIKAMLRETKRDISKYTC).

The protein resides in the cell membrane. This is an uncharacterized protein from Rickettsia bellii (strain RML369-C).